A 238-amino-acid chain; its full sequence is Ribosomal RNA small subunit methyltransferase G (238 aa).

S-adenosyl-L-methionine contacts are provided by residues Gly77, Phe82, 128–129, and Arg147; that span reads AE.

This sequence belongs to the methyltransferase superfamily. RNA methyltransferase RsmG family.

It localises to the cytoplasm. Specifically methylates the N7 position of guanine in position 535 of 16S rRNA. This chain is Ribosomal RNA small subunit methyltransferase G, found in Listeria welshimeri serovar 6b (strain ATCC 35897 / DSM 20650 / CCUG 15529 / CIP 8149 / NCTC 11857 / SLCC 5334 / V8).